Consider the following 443-residue polypeptide: Chromosomal replication initiator protein DnaA (443 aa).

The segment at 1-75 (MNTQLNEIWQ…AIKQVTFKEY (75 aa)) is domain I, interacts with DnaA modulators. The segment at 75–105 (YEIAFIVPSQENLNKLTKQTESAGNEDSPLS) is domain II. The tract at residues 106 to 321 (VLNPKYTFDT…GALNRVIAYS (216 aa)) is domain III, AAA+ region. ATP contacts are provided by G150, G152, K153, and T154. The interval 322–443 (SLTENEITVE…SEIKRNLLGK (122 aa)) is domain IV, binds dsDNA.

Belongs to the DnaA family. In terms of assembly, oligomerizes as a right-handed, spiral filament on DNA at oriC.

It localises to the cytoplasm. In terms of biological role, plays an essential role in the initiation and regulation of chromosomal replication. ATP-DnaA binds to the origin of replication (oriC) to initiate formation of the DNA replication initiation complex once per cell cycle. Binds the DnaA box (a 9 base pair repeat at the origin) and separates the double-stranded (ds)DNA. Forms a right-handed helical filament on oriC DNA; dsDNA binds to the exterior of the filament while single-stranded (ss)DNA is stabiized in the filament's interior. The ATP-DnaA-oriC complex binds and stabilizes one strand of the AT-rich DNA unwinding element (DUE), permitting loading of DNA polymerase. After initiation quickly degrades to an ADP-DnaA complex that is not apt for DNA replication. Binds acidic phospholipids. This Acetivibrio thermocellus (strain ATCC 27405 / DSM 1237 / JCM 9322 / NBRC 103400 / NCIMB 10682 / NRRL B-4536 / VPI 7372) (Clostridium thermocellum) protein is Chromosomal replication initiator protein DnaA.